The chain runs to 4262 residues: Polyketide synthase PksM (4262 aa).

Positions 1-114 (MITEQLHISL…ADMHRKEQTA (114 aa)) are N-terminal hotdog fold 1. Residues 1-271 (MITEQLHISL…GKSVRNMSAF (271 aa)) form the PKS/mFAS DH 1 domain. The active-site Proton acceptor; for dehydratase activity 1 is histidine 18. Residues 129 to 271 (DRILNLDEIY…GKSVRNMSAF (143 aa)) form a C-terminal hotdog fold 1 region. The active-site Proton donor; for dehydratase activity 1 is aspartate 190. Residues 293-367 (PAFEMYLRQL…ELAAHLADHY (75 aa)) form the Carrier 1 domain. Serine 327 is modified (O-(pantetheine 4'-phosphoryl)serine). A Ketosynthase family 3 (KS3) 1 domain is found at 393-831 (GEDIAIIGMA…GSNAHLILEE (439 aa)). Residues cysteine 569, histidine 704, and histidine 744 each act as for beta-ketoacyl synthase 1 activity in the active site. The segment at 1009–1135 (HPLVHRNTSD…GRAVISDEAE (127 aa)) is N-terminal hotdog fold 2. The 293-residue stretch at 1009 to 1301 (HPLVHRNTSD…MRALDGEQHS (293 aa)) folds into the PKS/mFAS DH 2 domain. Histidine 1038 serves as the catalytic Proton acceptor; for dehydratase activity 2. The tract at residues 1149 to 1301 (SLDTVTSEQC…MRALDGEQHS (153 aa)) is C-terminal hotdog fold 2. The Proton donor; for dehydratase activity 2 role is filled by aspartate 1211. Positions 2188-2261 (EKSTEYMKKL…ALVEHFIKTK (74 aa)) constitute a Carrier 2 domain. Serine 2222 carries the O-(pantetheine 4'-phosphoryl)serine modification. The segment covering 2275-2291 (VQQHTPAESRTQSSQKP) has biased composition (polar residues). The disordered stretch occupies residues 2275 to 2313 (VQQHTPAESRTQSSQKPDQAAKRTRRFRKLGFSGEKETP). The 416-residue stretch at 2319 to 2734 (SRDVAVIGIS…GSNAHIILEE (416 aa)) folds into the Ketosynthase family 3 (KS3) 2 domain. Catalysis depends on for beta-ketoacyl synthase 2 activity residues cysteine 2476, histidine 2611, and histidine 2651. Residues 2750–2826 (ALIVLSAKNM…DFIENKADSL (77 aa)) adopt a coiled-coil conformation. The Carrier 3 domain maps to 3409 to 3486 (SIEKRLEHDL…ELISFFLTDH (78 aa)). O-(pantetheine 4'-phosphoryl)serine is present on serine 3446. The Ketosynthase family 3 (KS3) 3 domain occupies 3529–3944 (DEPIAIIGMS…GTNAHAVIEE (416 aa)). Active-site for beta-ketoacyl synthase 3 activity residues include cysteine 3690, histidine 3825, and histidine 3865. Residues 4004–4033 (KAMEARLAIVANNQEQLVRKLKEYVEAMKN) adopt a coiled-coil conformation. The 78-residue stretch at 4135–4212 (NGKTHIQKII…ALSDHLALKA (78 aa)) folds into the Carrier 4 domain. Serine 4172 bears the O-(pantetheine 4'-phosphoryl)serine mark.

Pantetheine 4'-phosphate is required as a cofactor.

The protein resides in the cytoplasm. It functions in the pathway antibiotic biosynthesis; bacillaene biosynthesis. Its function is as follows. Involved in some intermediate steps for the synthesis of the antibiotic polyketide bacillaene which is involved in secondary metabolism. The sequence is that of Polyketide synthase PksM (pksM) from Bacillus subtilis (strain 168).